The following is a 128-amino-acid chain: Sulfurtransferase TusD (128 aa).

Cys-78 (cysteine persulfide intermediate) is an active-site residue.

This sequence belongs to the DsrE/TusD family. As to quaternary structure, heterohexamer, formed by a dimer of trimers. The hexameric TusBCD complex contains 2 copies each of TusB, TusC and TusD. The TusBCD complex interacts with TusE.

It is found in the cytoplasm. Its function is as follows. Part of a sulfur-relay system required for 2-thiolation of 5-methylaminomethyl-2-thiouridine (mnm(5)s(2)U) at tRNA wobble positions. Accepts sulfur from TusA and transfers it in turn to TusE. In Escherichia coli O17:K52:H18 (strain UMN026 / ExPEC), this protein is Sulfurtransferase TusD.